Consider the following 22-residue polypeptide: QGCCNGPKGCSSKWCRDHARCC.

Gln1 is subject to Pyrrolidone carboxylic acid; partial. 3 cysteine pairs are disulfide-bonded: Cys3–Cys15, Cys4–Cys21, and Cys10–Cys22. Cysteine amide is present on Cys22.

It belongs to the conotoxin M superfamily. Expressed by the venom duct.

It is found in the secreted. In terms of biological role, mu-conotoxins block voltage-gated sodium channels (Nav). This synthetic toxin blocks both voltage-gated sodium channels and nicotinic acetylcholine receptor (nAChR). Inhibits the skeletal muscle rNav1.4/SCN4A (IC(50)=1.3 nM) and the brain rNav1.2/SCN2A in a long-lasting manner. A low inhibition is also observed on neuronal mNav1.6/SCN8A and mNav1.7/SCN9A. Modestly blocks nAChR alpha-3/beta-2 subtype (IC(50)=450 nM) (partially reversible) and, to a lesser extent, alpha-7 and alpha-4/beta-2 subtypes (reversible). In vitro, decreases twitch tension in mouse hemidiaphragms (IC(50)=150 nM), and displays a high blocking effect in mouse extensor digitorum longus muscles (IC(50)=46 nM). The chain is Mu-conotoxin CnIIIC from Conus consors (Singed cone).